Reading from the N-terminus, the 104-residue chain is uncharacterized protein (104 aa).

This is an uncharacterized protein from Schizosaccharomyces pombe (strain 972 / ATCC 24843) (Fission yeast).